The primary structure comprises 328 residues: Hairy/enhancer-of-split related with YRPW motif-like protein (328 aa).

The tract at residues 1 to 54 (MKRPREPSGSDSESDGPIDVGREGELSQMARPLSTPSPSQMQARKKRRGIIEKR) is disordered. Residues 42–111 (QARKKRRGII…GGTGFFDARA (70 aa)) are transcriptional repression and interaction with NCOR1 and SIN3A. Residues 43–98 (ARKKRRGIIEKRRRDRINSSLSELRRLVPTAFEKQGSSKLEKAEVLQMTVDHLKML) form the bHLH domain. In terms of domain architecture, Orange spans 116–153 (FRSIGFRECLTEVIRYLGVLEGPSSRADPVRIRLLSHL). The tract at residues 236–272 (LLPSRGASSTRRARPLERPAAPLPAAPSGRATRGSHM) is disordered.

The protein belongs to the HEY family. Self-associates. Interacts with GATA4, GATA6, HES1, HEY1 and HEY2. Interacts with HDAC1, NCOR1 and SIN3A.

The protein resides in the nucleus. Functionally, downstream effector of Notch signaling which may be required for cardiovascular development. Transcriptional repressor which binds preferentially to the canonical E box sequence 5'-CACGTG-3'. Represses transcription by the cardiac transcriptional activators GATA4 and GATA6. This chain is Hairy/enhancer-of-split related with YRPW motif-like protein (HEYL), found in Bos taurus (Bovine).